The chain runs to 346 residues: Holliday junction branch migration complex subunit RuvB (346 aa).

A compositionally biased stretch (polar residues) spans 1 to 11 (MTEQRTIASSA). Residues 1–20 (MTEQRTIASSATREDEAADA) form a disordered region. Residues 1–183 (MTEQRTIASS…FGIVQRLEFY (183 aa)) are large ATPase domain (RuvB-L). ATP-binding positions include Ile22, Arg23, Gly64, Lys67, Thr68, Thr69, 130-132 (EDF), Arg173, Tyr183, and Arg220. Residue Thr68 participates in Mg(2+) binding. Residues 184–254 (SPQELTRIVI…VAQAAMQMLK (71 aa)) form a small ATPAse domain (RuvB-S) region. The head domain (RuvB-H) stretch occupies residues 257-346 (PEGFDELDRR…PAIGEPGDLF (90 aa)). Residues Arg293, Arg312, and Arg317 each coordinate DNA.

This sequence belongs to the RuvB family. Homohexamer. Forms an RuvA(8)-RuvB(12)-Holliday junction (HJ) complex. HJ DNA is sandwiched between 2 RuvA tetramers; dsDNA enters through RuvA and exits via RuvB. An RuvB hexamer assembles on each DNA strand where it exits the tetramer. Each RuvB hexamer is contacted by two RuvA subunits (via domain III) on 2 adjacent RuvB subunits; this complex drives branch migration. In the full resolvosome a probable DNA-RuvA(4)-RuvB(12)-RuvC(2) complex forms which resolves the HJ.

It localises to the cytoplasm. The catalysed reaction is ATP + H2O = ADP + phosphate + H(+). Its function is as follows. The RuvA-RuvB-RuvC complex processes Holliday junction (HJ) DNA during genetic recombination and DNA repair, while the RuvA-RuvB complex plays an important role in the rescue of blocked DNA replication forks via replication fork reversal (RFR). RuvA specifically binds to HJ cruciform DNA, conferring on it an open structure. The RuvB hexamer acts as an ATP-dependent pump, pulling dsDNA into and through the RuvAB complex. RuvB forms 2 homohexamers on either side of HJ DNA bound by 1 or 2 RuvA tetramers; 4 subunits per hexamer contact DNA at a time. Coordinated motions by a converter formed by DNA-disengaged RuvB subunits stimulates ATP hydrolysis and nucleotide exchange. Immobilization of the converter enables RuvB to convert the ATP-contained energy into a lever motion, pulling 2 nucleotides of DNA out of the RuvA tetramer per ATP hydrolyzed, thus driving DNA branch migration. The RuvB motors rotate together with the DNA substrate, which together with the progressing nucleotide cycle form the mechanistic basis for DNA recombination by continuous HJ branch migration. Branch migration allows RuvC to scan DNA until it finds its consensus sequence, where it cleaves and resolves cruciform DNA. The protein is Holliday junction branch migration complex subunit RuvB of Xanthomonas campestris pv. campestris (strain 8004).